A 617-amino-acid polypeptide reads, in one-letter code: Dihydroxy-acid dehydratase (617 aa).

Residue Asp-81 coordinates Mg(2+). Cys-122 is a [2Fe-2S] cluster binding site. The Mg(2+) site is built by Asp-123 and Lys-124. The residue at position 124 (Lys-124) is an N6-carboxylysine. Cys-195 provides a ligand contact to [2Fe-2S] cluster. A Mg(2+)-binding site is contributed by Glu-491. Ser-517 serves as the catalytic Proton acceptor.

Belongs to the IlvD/Edd family. In terms of assembly, homodimer. Requires [2Fe-2S] cluster as cofactor. The cofactor is Mg(2+).

It carries out the reaction (2R)-2,3-dihydroxy-3-methylbutanoate = 3-methyl-2-oxobutanoate + H2O. It catalyses the reaction (2R,3R)-2,3-dihydroxy-3-methylpentanoate = (S)-3-methyl-2-oxopentanoate + H2O. It participates in amino-acid biosynthesis; L-isoleucine biosynthesis; L-isoleucine from 2-oxobutanoate: step 3/4. The protein operates within amino-acid biosynthesis; L-valine biosynthesis; L-valine from pyruvate: step 3/4. Functionally, functions in the biosynthesis of branched-chain amino acids. Catalyzes the dehydration of (2R,3R)-2,3-dihydroxy-3-methylpentanoate (2,3-dihydroxy-3-methylvalerate) into 2-oxo-3-methylpentanoate (2-oxo-3-methylvalerate) and of (2R)-2,3-dihydroxy-3-methylbutanoate (2,3-dihydroxyisovalerate) into 2-oxo-3-methylbutanoate (2-oxoisovalerate), the penultimate precursor to L-isoleucine and L-valine, respectively. This is Dihydroxy-acid dehydratase from Caulobacter vibrioides (strain ATCC 19089 / CIP 103742 / CB 15) (Caulobacter crescentus).